We begin with the raw amino-acid sequence, 144 residues long: 3-hydroxyacyl-[acyl-carrier-protein] dehydratase FabZ (144 aa).

H47 is a catalytic residue.

This sequence belongs to the thioester dehydratase family. FabZ subfamily.

It localises to the cytoplasm. The enzyme catalyses a (3R)-hydroxyacyl-[ACP] = a (2E)-enoyl-[ACP] + H2O. In terms of biological role, involved in unsaturated fatty acids biosynthesis. Catalyzes the dehydration of short chain beta-hydroxyacyl-ACPs and long chain saturated and unsaturated beta-hydroxyacyl-ACPs. This chain is 3-hydroxyacyl-[acyl-carrier-protein] dehydratase FabZ, found in Dechloromonas aromatica (strain RCB).